A 451-amino-acid chain; its full sequence is Cobalamin reductase PduS (451 aa).

2 4Fe-4S ferredoxin-type domains span residues 255 to 284 (TVLS…HELS) and 300 to 330 (PQLL…MRIN). The [4Fe-4S] cluster site is built by Cys264, Cys267, Cys270, Cys274, Cys309, Cys312, Cys315, and Cys320.

This sequence belongs to the PduS cobalamin reductase family. In terms of assembly, monomer, forms a complex with PduO. Interacts with PduT, probably via the N-terminus of PduS. It depends on [4Fe-4S] cluster as a cofactor. FMN serves as cofactor.

It is found in the bacterial microcompartment. The protein operates within polyol metabolism; 1,2-propanediol degradation. Its function is as follows. A bifunctional cobalamin reductase that converts cob(III)alamin to cob(II)alamin and then to cob(I)alamin in the bacterial microcompartment (BMC) dedicated to 1,2-propanediol (1,2-PD) degradation. PduS and PduO allow regeneration of the adenosylcobalamin cofactor within the BMC. Cobalamin reduction probably occurs spontaneously in the presence of free reduced flavin nucleotides, this protein may be involved in electron transfer for this reduction. Expression of a cosmid containing the full 21-gene pdu operon in E.coli allows E.coli to grow on 1,2-propanediol (1,2-PD) with the appearance of BMCs in its cytoplasm. In terms of biological role, the 1,2-PD-specific bacterial microcompartment (BMC) concentrates low levels of 1,2-PD catabolic enzymes, concentrates volatile reaction intermediates thus enhancing pathway flux and keeps the level of toxic, mutagenic propionaldehyde low. This chain is Cobalamin reductase PduS, found in Citrobacter freundii.